Reading from the N-terminus, the 270-residue chain is Aliphatic sulfonates import ATP-binding protein SsuB 3 (270 aa).

The ABC transporter domain occupies 17–238 (LAVRKLKKAF…VRGSHRLAAL (222 aa)). 49–56 (GRSGCGKS) contacts ATP.

The protein belongs to the ABC transporter superfamily. Aliphatic sulfonates importer (TC 3.A.1.17.2) family. The complex is composed of two ATP-binding proteins (SsuB), two transmembrane proteins (SsuC) and a solute-binding protein (SsuA).

It is found in the cell inner membrane. The catalysed reaction is ATP + H2O + aliphatic sulfonate-[sulfonate-binding protein]Side 1 = ADP + phosphate + aliphatic sulfonateSide 2 + [sulfonate-binding protein]Side 1.. Functionally, part of the ABC transporter complex SsuABC involved in aliphatic sulfonates import. Responsible for energy coupling to the transport system. The sequence is that of Aliphatic sulfonates import ATP-binding protein SsuB 3 from Pseudomonas syringae pv. syringae (strain B728a).